The primary structure comprises 492 residues: NAD(P)H-quinone oxidoreductase subunit 2 A, chloroplastic (492 aa).

13 consecutive transmembrane segments (helical) span residues 6–26 (LLLF…GLIL), 39–59 (TPWL…ALLF), 81–101 (VFQF…VEYI), 106–126 (MAIT…MFLC), 131–151 (LITI…LSGY), 165–185 (YLLM…WLYG), 209–229 (PGIS…LSPA), 277–297 (WHLL…LIAI), 305–325 (MLAY…IVGD), 329–349 (GYAS…GTFA), 377–397 (ALSS…AGFF), 400–420 (LHLF…IGLL), and 466–486 (MIVC…IIAI).

It belongs to the complex I subunit 2 family. In terms of assembly, NDH is composed of at least 16 different subunits, 5 of which are encoded in the nucleus.

The protein resides in the plastid. It localises to the chloroplast thylakoid membrane. It carries out the reaction a plastoquinone + NADH + (n+1) H(+)(in) = a plastoquinol + NAD(+) + n H(+)(out). The enzyme catalyses a plastoquinone + NADPH + (n+1) H(+)(in) = a plastoquinol + NADP(+) + n H(+)(out). Its function is as follows. NDH shuttles electrons from NAD(P)H:plastoquinone, via FMN and iron-sulfur (Fe-S) centers, to quinones in the photosynthetic chain and possibly in a chloroplast respiratory chain. The immediate electron acceptor for the enzyme in this species is believed to be plastoquinone. Couples the redox reaction to proton translocation, and thus conserves the redox energy in a proton gradient. This is NAD(P)H-quinone oxidoreductase subunit 2 A, chloroplastic from Illicium oligandrum (Star anise).